Reading from the N-terminus, the 156-residue chain is Ribonuclease H (156 aa).

The 142-residue stretch at Glu3 to Glu144 folds into the RNase H type-1 domain. Residues Asp12, Glu50, Asp72, and Asp136 each coordinate Mg(2+).

It belongs to the RNase H family. As to quaternary structure, monomer. Requires Mg(2+) as cofactor.

The protein localises to the cytoplasm. It catalyses the reaction Endonucleolytic cleavage to 5'-phosphomonoester.. Functionally, endonuclease that specifically degrades the RNA of RNA-DNA hybrids. The protein is Ribonuclease H of Shewanella baltica (strain OS223).